A 491-amino-acid chain; its full sequence is MKERKVIIKTGLNLENSYASLPEIFFTRQSPSRIPSPKLAVLNYPLITSLELNAQVLQSADGVDILAGNKTPEEAIPLAQAYAGHQFGHFTMLGDGRALLLGEHITPLGDRFDIQLKGSGKTPYSRGGDGKAALGPMLREYIISEAMNALGIPTTRSLAVVTTGESIIRETKLPGAILTRVAASHIRVGTFEYVSRWGTVEELRALADYTLQRHFKEGYDKENPYLFLLQEVIKKQAELIAKWQLVGFVHGVMNTDNMTISGETIDYGPCAFMDVYDPETVFSSIDIYGRYAYGNQPNIAAWNLARFAETLLPLLNIDPNEAIKIAENAISDFTKLYKNNWLSGMRAKLGVFNQELEDEYLIEDLLSIMNKYGSDYTNTFRTLTSGNIEDTVLLGKMEFDKWYKLWQERLTRQEESRLSSKQLMKSSNPSVIPRNHRVEEALEAAVKEGDYSVMEKLLDALSKPYAYSKEQDYYSKLPEPSTCPYQTYCGT.

Residues glycine 94, glycine 96, arginine 97, lysine 117, aspartate 129, glycine 130, arginine 180, and arginine 187 each coordinate ATP. The active-site Proton acceptor is aspartate 256. Mg(2+)-binding residues include asparagine 257 and aspartate 266. ATP is bound at residue aspartate 266.

It belongs to the SELO family. It depends on Mg(2+) as a cofactor. The cofactor is Mn(2+).

It carries out the reaction L-seryl-[protein] + ATP = 3-O-(5'-adenylyl)-L-seryl-[protein] + diphosphate. It catalyses the reaction L-threonyl-[protein] + ATP = 3-O-(5'-adenylyl)-L-threonyl-[protein] + diphosphate. The enzyme catalyses L-tyrosyl-[protein] + ATP = O-(5'-adenylyl)-L-tyrosyl-[protein] + diphosphate. The catalysed reaction is L-histidyl-[protein] + UTP = N(tele)-(5'-uridylyl)-L-histidyl-[protein] + diphosphate. It carries out the reaction L-seryl-[protein] + UTP = O-(5'-uridylyl)-L-seryl-[protein] + diphosphate. It catalyses the reaction L-tyrosyl-[protein] + UTP = O-(5'-uridylyl)-L-tyrosyl-[protein] + diphosphate. In terms of biological role, nucleotidyltransferase involved in the post-translational modification of proteins. It can catalyze the addition of adenosine monophosphate (AMP) or uridine monophosphate (UMP) to a protein, resulting in modifications known as AMPylation and UMPylation. In Clostridium botulinum (strain Loch Maree / Type A3), this protein is Protein nucleotidyltransferase YdiU.